The sequence spans 150 residues: SsrA-binding protein (150 aa).

Belongs to the SmpB family.

Its subcellular location is the cytoplasm. Its function is as follows. Required for rescue of stalled ribosomes mediated by trans-translation. Binds to transfer-messenger RNA (tmRNA), required for stable association of tmRNA with ribosomes. tmRNA and SmpB together mimic tRNA shape, replacing the anticodon stem-loop with SmpB. tmRNA is encoded by the ssrA gene; the 2 termini fold to resemble tRNA(Ala) and it encodes a 'tag peptide', a short internal open reading frame. During trans-translation Ala-aminoacylated tmRNA acts like a tRNA, entering the A-site of stalled ribosomes, displacing the stalled mRNA. The ribosome then switches to translate the ORF on the tmRNA; the nascent peptide is terminated with the 'tag peptide' encoded by the tmRNA and targeted for degradation. The ribosome is freed to recommence translation, which seems to be the essential function of trans-translation. In Polynucleobacter asymbioticus (strain DSM 18221 / CIP 109841 / QLW-P1DMWA-1) (Polynucleobacter necessarius subsp. asymbioticus), this protein is SsrA-binding protein.